The sequence spans 138 residues: Ig heavy chain V region TEPC 1017 (138 aa).

An N-terminal signal peptide occupies residues 1-20 (MGWSYIILFLVATATDVHSQ). The interval 21–49 (VQLQQPGAELVKPGASVQLSCKASGHTFT) is framework-1. A disulfide bridge links Cys41 with Cys115. A complementarity-determining-1 region spans residues 50-54 (NYWIH). Residues 55–68 (WVKQRPGQGLEWIG) are framework-2. A complementarity-determining-2 region spans residues 69–85 (EINPNDGRSNYNEKFKN). The interval 86 to 117 (KATLTVDKSSSTAYMQLSSLTPEEFAVYYCAR) is framework-3. Residues 118–127 (SDGYYDWFVY) form a complementarity-determining-3 region. Residues 128 to 138 (WGQGTLVTFSA) form a framework-4 region.

In Mus musculus (Mouse), this protein is Ig heavy chain V region TEPC 1017.